Consider the following 176-residue polypeptide: Nucleoside triphosphate/diphosphate phosphatase (176 aa).

The active-site Proton donor is Arg23. Mg(2+) is bound by residues Asn87, Asp103, Asp105, Asp107, Asp120, and Glu123.

Belongs to the Ntdp family. Mg(2+) is required as a cofactor.

The catalysed reaction is a ribonucleoside 5'-triphosphate + H2O = a ribonucleoside 5'-diphosphate + phosphate + H(+). It catalyses the reaction a ribonucleoside 5'-diphosphate + H2O = a ribonucleoside 5'-phosphate + phosphate + H(+). Functionally, has nucleoside phosphatase activity towards nucleoside triphosphates and nucleoside diphosphates. The chain is Nucleoside triphosphate/diphosphate phosphatase from Lactococcus lactis subsp. cremoris (strain MG1363).